The chain runs to 181 residues: UPF0232 protein MAP_0004 (181 aa).

A compositionally biased stretch (polar residues) spans 1–11 (MSDDQSPSPSG). 2 disordered regions span residues 1–70 (MSDD…PQPL) and 161–181 (APSW…DTYG). The span at 18–39 (LVRRTLEEARAAARAQGKDAGR) shows a compositional bias: basic and acidic residues. The span at 40–50 (GRAAAPTPRRV) shows a compositional bias: low complexity.

It belongs to the UPF0232 family.

This chain is UPF0232 protein MAP_0004, found in Mycolicibacterium paratuberculosis (strain ATCC BAA-968 / K-10) (Mycobacterium paratuberculosis).